Here is a 629-residue protein sequence, read N- to C-terminus: MFYPEQFDVIIIGGGHAGTEAAMAAARMGRQTLLLTHNIDTLGQMSCNPAIGGIGKGHLVKEIDALGGLMAKATDQAGIQFRTLNASKGPAVRATRAQADRVLYRQAVRMALENQPNLMIFQQPVEDLIVENDTVTGAVTRMGLKFRAKAVVLTVGTFLDGKIHIGLENYSGGRAGGPPAISLAQRLRELPLRVNRLKTGTPPRIDARTIDFSQLTQQLGDNPTPVFSFLGNVKQHPQQIPCYITHTNEKTHDVIRNNLDRSPMYTGIIEGIGPRYCPSIEDKVMRFADRDAHQIFLEPEGLTSNEIYPNGISTSLPFDVQMQIVHSMKGMENARIIRPGYAIEYDFFDPRDLKQTLESKFIHGLFFAGQINGTTGYEEAAAQGLLAGLNAARYASEEESWFPRRDQAYIGVLVDDLCTLGTKEPYRMFTSRAEYRLMLREDNADLRLTEKGRELGLVDDSRWEHYCRKLEMVEQERQRLRNIWIHPNSNNLNDINNILKMPLSKEANGEDLLRRPEMNYKLLTSLPLFSPSLEEPQAADQVEIQVKYEGYIARQQEEIEKQLRNENTSLPVDLDYRQISGLSNEVVAKLNDHKPSSIGQASRISGVTPAAISILLVWLKKQGLLRRSS.

Position 13 to 18 (glycine 13 to glycine 18) interacts with FAD. Residue glycine 273 to phenylalanine 287 coordinates NAD(+).

This sequence belongs to the MnmG family. Homodimer. Heterotetramer of two MnmE and two MnmG subunits. Requires FAD as cofactor.

It is found in the cytoplasm. Its function is as follows. NAD-binding protein involved in the addition of a carboxymethylaminomethyl (cmnm) group at the wobble position (U34) of certain tRNAs, forming tRNA-cmnm(5)s(2)U34. The polypeptide is tRNA uridine 5-carboxymethylaminomethyl modification enzyme MnmG (Photorhabdus laumondii subsp. laumondii (strain DSM 15139 / CIP 105565 / TT01) (Photorhabdus luminescens subsp. laumondii)).